Here is a 182-residue protein sequence, read N- to C-terminus: Probable RNA 2'-phosphotransferase (182 aa).

This sequence belongs to the KptA/TPT1 family.

Functionally, removes the 2'-phosphate from RNA via an intermediate in which the phosphate is ADP-ribosylated by NAD followed by a presumed transesterification to release the RNA and generate ADP-ribose 1''-2''-cyclic phosphate (APPR&gt;P). May function as an ADP-ribosylase. This chain is Probable RNA 2'-phosphotransferase, found in Flavobacterium johnsoniae (strain ATCC 17061 / DSM 2064 / JCM 8514 / BCRC 14874 / CCUG 350202 / NBRC 14942 / NCIMB 11054 / UW101) (Cytophaga johnsonae).